The primary structure comprises 112 residues: Late transcription coactivator (112 aa).

Residues 62–92 (FLEENSIPETQFAKFIPSGIIEKIQSEAIDE) form an interaction with host RNAP region. Residues 106 to 112 (NTLDFLL) are involved in transcriptional enhancement.

Belongs to the Tevenvirinae late transcription coactivator family. Interacts with the beta subunit of host RNAP RpoB (via flap domain). Part of the transcription activation complex containing host RNAP, the viral RNA polymerase sigma-like factor, the coactivator gp33, and the sliding clamp.

Activates transcription at late promoters when the sliding clamp is present. Binds to both the host RNA polymerase (RNAP) and the upstream dsDNA. The chain is Late transcription coactivator (33) from Enterobacteria phage T4 (Bacteriophage T4).